A 384-amino-acid chain; its full sequence is Dual specificity protein phosphatase 5 (384 aa).

Residues 19-141 enclose the Rhodanese domain; that stretch reads AAARCVVLDC…FYSEYPECCV (123 aa). The Nuclear localization signal signature appears at 53–74; the sequence is RRARGGAVSARYVLPDEAARAR. The Tyrosine-protein phosphatase domain maps to 178–319; sequence GPVEILPFLY…LLQYESEILP (142 aa). Cys263 serves as the catalytic Phosphocysteine intermediate.

This sequence belongs to the protein-tyrosine phosphatase family. Non-receptor class dual specificity subfamily.

It is found in the nucleus. The enzyme catalyses O-phospho-L-tyrosyl-[protein] + H2O = L-tyrosyl-[protein] + phosphate. The catalysed reaction is O-phospho-L-seryl-[protein] + H2O = L-seryl-[protein] + phosphate. It catalyses the reaction O-phospho-L-threonyl-[protein] + H2O = L-threonyl-[protein] + phosphate. Its function is as follows. Dual specificity protein phosphatase; active with phosphotyrosine, phosphoserine and phosphothreonine residues. The highest relative activity is toward ERK1. This chain is Dual specificity protein phosphatase 5 (DUSP5), found in Homo sapiens (Human).